The following is a 444-amino-acid chain: Cop9 signalosome complex subunit 11 (444 aa).

Residues 195 to 367 enclose the PCI domain; that stretch reads FFTMMTSEPL…IHFEDSSILQ (173 aa). The interval 419–439 is disordered; the sequence is SSDDMDIDEVNDRSDISDSEG.

Component of a COP9 signalosome-like (CSN) complex, composed of RRI1/CSN5, CSN9, RRI2/CSN10, PCI8/CSN11, CSN12 and CSI1. Interacts with PRT1 and RPG1, 2 subunits of the core complex of translation initiation factor 3 (eIF3).

Its subcellular location is the cytoplasm. The protein resides in the nucleus. In terms of biological role, component of the COP9 signalosome (CSN) complex that acts as an regulator of the ubiquitin (Ubl) conjugation pathway by mediating the deneddylation of the cullin subunit of SCF-type E3 ubiquitin-protein ligase complexes The CSN complex is involved in the regulation of the mating pheromone response. PCI8 may also be involved in transcriptional and translational control. This is Cop9 signalosome complex subunit 11 (PCI8) from Saccharomyces cerevisiae (strain ATCC 204508 / S288c) (Baker's yeast).